Here is a 469-residue protein sequence, read N- to C-terminus: Glutamine synthetase (469 aa).

A GS beta-grasp domain is found at 12–97 (HDVKWVDLRF…LVCDIIEPST (86 aa)). The GS catalytic domain maps to 105-469 (PRNIAKRAEE…PLEYDLYYSV (365 aa)). Mg(2+)-binding residues include E130 and E132. E208 contacts ATP. Positions 213 and 221 each coordinate Mg(2+). L-glutamate-binding positions include 265-266 (NG) and G266. H270 is a binding site for Mg(2+). ATP contacts are provided by residues 272–274 (HMS) and S274. The L-glutamate site is built by R322, E328, and R340. ATP-binding residues include R340, R345, and K353. Position 358 (E358) interacts with Mg(2+). Residue R360 coordinates L-glutamate. Residue Y398 is modified to O-AMP-tyrosine.

The protein belongs to the glutamine synthetase family. Oligomer of 12 subunits arranged in the form of two hexameric ring. It depends on Mg(2+) as a cofactor.

It is found in the cytoplasm. It catalyses the reaction L-glutamate + NH4(+) + ATP = L-glutamine + ADP + phosphate + H(+). With respect to regulation, the activity of this enzyme could be controlled by adenylation under conditions of abundant glutamine. Functionally, catalyzes the ATP-dependent biosynthesis of glutamine from glutamate and ammonia. This is Glutamine synthetase from Pseudomonas aeruginosa (strain ATCC 15692 / DSM 22644 / CIP 104116 / JCM 14847 / LMG 12228 / 1C / PRS 101 / PAO1).